The primary structure comprises 714 residues: Hormonally up-regulated neu tumor-associated kinase (714 aa).

Low complexity predominate over residues 1-15 (MPAAAGDGLLGEPAA). The disordered stretch occupies residues 1–26 (MPAAAGDGLLGEPAAPGGGGGAEDAA). The Protein kinase domain occupies 62–320 (LIGSRKLGEG…IQQALANRWL (259 aa)). Residues 68 to 76 (LGEGSFAKV) and K91 each bind ATP. The Proton acceptor role is filled by D186. Positions 437–461 (KKPKEQEKRGDFLHRPFSKKLDKNL) are enriched in basic and acidic residues. 3 disordered regions span residues 437-471 (KKPK…SGSL), 518-552 (MEFI…HKED), and 590-660 (ARRN…VKSR). The span at 599-611 (LSPGLPSGSMSPL) shows a compositional bias: low complexity. A compositionally biased stretch (basic and acidic residues) spans 623–635 (AHEDKNSPPKEEG).

This sequence belongs to the protein kinase superfamily. CAMK Ser/Thr protein kinase family. SNF1 subfamily.

The enzyme catalyses L-seryl-[protein] + ATP = O-phospho-L-seryl-[protein] + ADP + H(+). It carries out the reaction L-threonyl-[protein] + ATP = O-phospho-L-threonyl-[protein] + ADP + H(+). This Pan troglodytes (Chimpanzee) protein is Hormonally up-regulated neu tumor-associated kinase (HUNK).